We begin with the raw amino-acid sequence, 380 residues long: Probable peptidoglycan glycosyltransferase FtsW (380 aa).

The next 10 helical transmembrane spans lie at 14–34 (LLWC…SSSI), 52–72 (ILYL…PISF), 79–99 (IILL…NSIH), 112–131 (MQPS…NYLS), 141–161 (FGGF…LLVE), 162–182 (PDLG…FISG), 188–208 (FIPT…KSPY), 268–288 (IIGE…IFFI), 304–324 (IFFS…QTLI), and 341–361 (PLIS…IILI).

This sequence belongs to the SEDS family. FtsW subfamily.

It localises to the cell membrane. It catalyses the reaction [GlcNAc-(1-&gt;4)-Mur2Ac(oyl-L-Ala-gamma-D-Glu-L-Lys-D-Ala-D-Ala)](n)-di-trans,octa-cis-undecaprenyl diphosphate + beta-D-GlcNAc-(1-&gt;4)-Mur2Ac(oyl-L-Ala-gamma-D-Glu-L-Lys-D-Ala-D-Ala)-di-trans,octa-cis-undecaprenyl diphosphate = [GlcNAc-(1-&gt;4)-Mur2Ac(oyl-L-Ala-gamma-D-Glu-L-Lys-D-Ala-D-Ala)](n+1)-di-trans,octa-cis-undecaprenyl diphosphate + di-trans,octa-cis-undecaprenyl diphosphate + H(+). It participates in cell wall biogenesis; peptidoglycan biosynthesis. In terms of biological role, peptidoglycan polymerase that is essential for cell division. The polypeptide is Probable peptidoglycan glycosyltransferase FtsW (Buchnera aphidicola subsp. Baizongia pistaciae (strain Bp)).